A 434-amino-acid polypeptide reads, in one-letter code: MSNSLEERLRANSSAFDGLLALIPAKYYYDEKSQEQWKAKKKTKEQSKNDKLKKLDPEQRDDETSSTLEVMKKKEKDAKPVVLPGEKFKHMKMQKQKEATSKVEGDSDLNVEVNDPMIIAPDEDEEEEEDIKVIFDDEGNEIPLESKKDTTEPDRSVEKKSITEEEKLQRKKNLEALRSKLQAKISDMKSKRKAPGSREAILAQRKRKEELKKRKRLESEQEQDQDEIASDSDMEDIDSDLENNSKKRFKKGKKDSEINADGVMFQNIIFDDGARATSDLQRLRKAGRTKGPAKNDVKSHLKLLEAKKNKMEAKDELEQIKQKEKEKWQKAMLQAEGIKIRDDEKLLRKAIKRKEAQKRKSAIEWSERKRVVEDTISERQKRREENLRIRKDNKGKKRNKQEKMKRKYVGSAVPKKRAGFEGRLKTGKKKGGPK.

An N-acetylserine modification is found at S2. Composition is skewed to basic and acidic residues over residues 32 to 58 (KSQE…LDPE), 70 to 79 (VMKKKEKDAK), and 95 to 105 (KQKEATSKVEG). Residues 32 to 257 (KSQEQWKAKK…RFKKGKKDSE (226 aa)) are disordered. The span at 121–140 (PDEDEEEEEDIKVIFDDEGN) shows a compositional bias: acidic residues. A compositionally biased stretch (basic and acidic residues) spans 144-178 (LESKKDTTEPDRSVEKKSITEEEKLQRKKNLEALR). Coiled-coil stretches lie at residues 162-230 (ITEE…EIAS) and 293-360 (AKND…QKRK). The segment covering 220 to 241 (EQEQDQDEIASDSDMEDIDSDL) has biased composition (acidic residues). The span at 375 to 392 (TISERQKRREENLRIRKD) shows a compositional bias: basic and acidic residues. The segment at 375-434 (TISERQKRREENLRIRKDNKGKKRNKQEKMKRKYVGSAVPKKRAGFEGRLKTGKKKGGPK) is disordered. Basic residues-rich tracts occupy residues 393–408 (NKGK…KRKY) and 425–434 (KTGKKKGGPK).

It belongs to the SURF6 family. In terms of assembly, component of the 90S and 60S pre-ribosomal particles.

Its subcellular location is the nucleus. The protein resides in the nucleolus. Its function is as follows. Involved in ribosome biogenesis and cell polarity. Required for the synthesis of both 40S and 60S ribosomal subunits and may also play some direct role in correct positioning of the mitotic spindle during mitosis. This chain is Ribosomal RNA-processing protein 14 (RRP14), found in Saccharomyces cerevisiae (strain ATCC 204508 / S288c) (Baker's yeast).